The following is a 274-amino-acid chain: Purine nucleoside phosphorylase 1 (274 aa).

Phosphate is bound by residues serine 29, histidine 60, 80-82, and alanine 112; that span reads RFH. Residue serine 29 is modified to Phosphoserine. Glutamate 192 contributes to the a purine D-ribonucleoside binding site. Serine 211 lines the phosphate pocket. Position 234 (asparagine 234) interacts with a purine D-ribonucleoside.

The protein belongs to the PNP/MTAP phosphorylase family. Homotrimer.

It catalyses the reaction a purine D-ribonucleoside + phosphate = a purine nucleobase + alpha-D-ribose 1-phosphate. The enzyme catalyses a purine 2'-deoxy-D-ribonucleoside + phosphate = a purine nucleobase + 2-deoxy-alpha-D-ribose 1-phosphate. Its pathway is purine metabolism; purine nucleoside salvage. Its function is as follows. The purine nucleoside phosphorylases catalyze the phosphorolytic breakdown of the N-glycosidic bond in the beta-(deoxy)ribonucleoside molecules, with the formation of the corresponding free purine bases and pentose-1-phosphate. Cleaves guanosine, inosine, 2'-deoxyguanosine and 2'-deoxyinosine. This is Purine nucleoside phosphorylase 1 (punA) from Geobacillus stearothermophilus (Bacillus stearothermophilus).